The sequence spans 141 residues: uncharacterized protein (141 aa).

2 helical membrane-spanning segments follow: residues 64–84 (IAAV…IEAI) and 112–132 (IVGS…LVLI).

It is found in the cell membrane. This is an uncharacterized protein from Sinorhizobium fredii (strain NBRC 101917 / NGR234).